The chain runs to 217 residues: Probable transaldolase (217 aa).

The active-site Schiff-base intermediate with substrate is Lys-83.

This sequence belongs to the transaldolase family. Type 3B subfamily.

It is found in the cytoplasm. It catalyses the reaction D-sedoheptulose 7-phosphate + D-glyceraldehyde 3-phosphate = D-erythrose 4-phosphate + beta-D-fructose 6-phosphate. Its pathway is carbohydrate degradation; pentose phosphate pathway; D-glyceraldehyde 3-phosphate and beta-D-fructose 6-phosphate from D-ribose 5-phosphate and D-xylulose 5-phosphate (non-oxidative stage): step 2/3. Its function is as follows. Transaldolase is important for the balance of metabolites in the pentose-phosphate pathway. In Jannaschia sp. (strain CCS1), this protein is Probable transaldolase.